The following is a 182-amino-acid chain: Small ribosomal subunit protein uS4c (182 aa).

The tract at residues 12–31 (PGFTSKRPRSGSDLKNPLRS) is disordered. The 62-residue stretch at 82 to 143 (MRLDNILFRL…KQRSKALIQN (62 aa)) folds into the S4 RNA-binding domain.

This sequence belongs to the universal ribosomal protein uS4 family. In terms of assembly, part of the 30S ribosomal subunit. Contacts protein S5. The interaction surface between S4 and S5 is involved in control of translational fidelity.

It localises to the plastid. The protein localises to the chloroplast. Its function is as follows. One of the primary rRNA binding proteins, it binds directly to 16S rRNA where it nucleates assembly of the body of the 30S subunit. In terms of biological role, with S5 and S12 plays an important role in translational accuracy. This is Small ribosomal subunit protein uS4c (rps4) from Hymenocallis littoralis (Beach spider-lily).